The following is a 242-amino-acid chain: Synaptonemal complex central element protein 1-like (242 aa).

The disordered stretch occupies residues 1–24 (MAGKLKPLNVEAPEATEEAEGQAK). Positions 44-181 (LEPQIEDLIS…LREVERRLHS (138 aa)) form a coiled coil. The interval 206 to 242 (VRSAPEVGAGEGEAGPELPRARDEEDPEPPVAAPDAL) is disordered.

Belongs to the SYCE family.

In terms of biological role, may be involved in meiosis. This chain is Synaptonemal complex central element protein 1-like (SYCE1L), found in Homo sapiens (Human).